The sequence spans 416 residues: MGLSKLSISDVDLKGKRVLIRVDFNVPMKDGKVTNTQRIAAAIPTIKYALDKGAKSVVLMSHLGRPDGHKVDKYSLKPVCPEVSKLLGKEVTFLNDCVGPDVVNACANPAPGSVFLLENLRFHVEEEGKGVSPTGEKTKATADQIKAFSESLTKLGDVYVNDAFGTAHRAHASMVGCQLPQKACGFLMNKELTYFAKALENPERPFLAILGGAKVSDKIQLINNMLDKVNELIIGGGMAYTFLKQIHNMHIGNSLFDAPGAEIVHKVMETAKAKNVAIHLPVDFVTADKFADDANTEIRTIQSGIADGWMGLDIGPKTIEEFSKVISRAKTIVWNGPMGVFEMDKFATGTKAAMDEVVKATKNGATTIIGGGDTATCCAKWDTEDKVSHVSTGGGASLELLEGKQLPGVVALTDAH.

Residues V22, D23, F24, N25, Q37, R38, S61, H62, G64, R65, L120, R121, H168, and R169 each coordinate (2R)-3-phosphoglycerate. G212 contacts ADP. G212 serves as a coordination point for CDP. A213 and K214 together coordinate AMP. An ATP-binding site is contributed by A213. A213 provides a ligand contact to Mg(2+). Residue D217 coordinates CDP. D217 provides a ligand contact to Mg(2+). K218 lines the AMP pocket. Residue K218 participates in ATP binding. G236 is an ADP binding site. Residue G236 participates in CDP binding. 2 residues coordinate AMP: G237 and G311. Residues G237 and G311 each contribute to the ATP site. CDP-binding residues include G336 and F341. F341 provides a ligand contact to ADP. E342 lines the AMP pocket. ATP is bound by residues E342, D373, and T374. D373 contacts Mg(2+).

The protein belongs to the phosphoglycerate kinase family. As to quaternary structure, monomer. Requires Mg(2+) as cofactor. In terms of tissue distribution, expressed in all cells of the worm (at protein level), higher expression in the cells associated with the tubercles (tegumental modifications), the muscle and along the tegument.

The enzyme catalyses (2R)-3-phosphoglycerate + ATP = (2R)-3-phospho-glyceroyl phosphate + ADP. It functions in the pathway carbohydrate degradation; glycolysis; pyruvate from D-glyceraldehyde 3-phosphate: step 2/5. Involved in the seventh step in glycolysis. Catalyzes the conversion of 1,3-bisphosphoglycerate ((2R)-3-phospho-glyceroyl phosphate) to 3-phosphoglycerate ((2R)-3-phosphoglycerate) and results in the formation of ATP. Associated with the tegument to provide the energy needed for the tegumental repair resulting from immune damage. The chain is Phosphoglycerate kinase (PGK) from Schistosoma mansoni (Blood fluke).